The chain runs to 89 residues: Small ribosomal subunit protein uS15 (89 aa).

It belongs to the universal ribosomal protein uS15 family. Part of the 30S ribosomal subunit. Forms a bridge to the 50S subunit in the 70S ribosome, contacting the 23S rRNA.

One of the primary rRNA binding proteins, it binds directly to 16S rRNA where it helps nucleate assembly of the platform of the 30S subunit by binding and bridging several RNA helices of the 16S rRNA. Functionally, forms an intersubunit bridge (bridge B4) with the 23S rRNA of the 50S subunit in the ribosome. This Geobacillus stearothermophilus (Bacillus stearothermophilus) protein is Small ribosomal subunit protein uS15.